A 156-amino-acid polypeptide reads, in one-letter code: Snaclec A5 (156 aa).

Residues 1-23 form the signal peptide; that stretch reads MGRSISVSFGLLVVFLSLSGTGA. 3 disulfides stabilise this stretch: Cys27/Cys38, Cys55/Cys154, and Cys129/Cys146. The 122-residue stretch at 34-155 folds into the C-type lectin domain; the sequence is HEGHCYKVFN…CGKPYRFTCE (122 aa).

Belongs to the snaclec family. Heterodimer; disulfide-linked. In terms of tissue distribution, expressed by the venom gland.

It localises to the secreted. Functionally, interferes with one step of hemostasis (modulation of platelet aggregation, or coagulation cascade, for example). The protein is Snaclec A5 of Macrovipera lebetinus (Levantine viper).